The sequence spans 302 residues: MSTKFNVKTFQGMILALQEYWANVGCTIVQPFDMEVGAGTSHPMTALRALGPEPMAFAYVQPSRRPTDGRYGENPNRLQHYYQFQVVIKPSPDNIQELYLGSLKMLGFDPTQHDIRFVEDNWENPTLGAWGLGWEVWLNGMEVTQFTYFQQVGGLECKPVTGEVTYGLERLAMYIQGVDSVYDLVYSDGPLGKTTYGDVFHQNEVEQSTYNFEYADVDFLFKAFEQYEKEAQELLALEKPLPLPAYERVLKAAHSFNMLDARKAISVTERQRYILRIRALTKGVAEAYYASREALGFPGCNK.

The protein belongs to the class-II aminoacyl-tRNA synthetase family. As to quaternary structure, tetramer of two alpha and two beta subunits.

The protein localises to the cytoplasm. The enzyme catalyses tRNA(Gly) + glycine + ATP = glycyl-tRNA(Gly) + AMP + diphosphate. The chain is Glycine--tRNA ligase alpha subunit from Haemophilus ducreyi (strain 35000HP / ATCC 700724).